A 196-amino-acid polypeptide reads, in one-letter code: Imidazoleglycerol-phosphate dehydratase (196 aa).

It belongs to the imidazoleglycerol-phosphate dehydratase family.

The protein localises to the cytoplasm. The enzyme catalyses D-erythro-1-(imidazol-4-yl)glycerol 3-phosphate = 3-(imidazol-4-yl)-2-oxopropyl phosphate + H2O. It participates in amino-acid biosynthesis; L-histidine biosynthesis; L-histidine from 5-phospho-alpha-D-ribose 1-diphosphate: step 6/9. The polypeptide is Imidazoleglycerol-phosphate dehydratase (Desulforudis audaxviator (strain MP104C)).